The chain runs to 89 residues: Large ribosomal subunit protein bL27 (89 aa).

The segment at methionine 1–lysine 24 is disordered.

The protein belongs to the bacterial ribosomal protein bL27 family.

The sequence is that of Large ribosomal subunit protein bL27 from Azorhizobium caulinodans (strain ATCC 43989 / DSM 5975 / JCM 20966 / LMG 6465 / NBRC 14845 / NCIMB 13405 / ORS 571).